A 536-amino-acid polypeptide reads, in one-letter code: SNW domain-containing protein 1 (536 aa).

The tract at residues 1–46 (MALTSFLPAPTQLSQDQLEAEEKARSQRSRQTSLVSSRREPPPYGY) is disordered. An N-acetylalanine modification is found at A2. Position 14 is a phosphoserine (S14). Residue K23 forms a Glycyl lysine isopeptide (Lys-Gly) (interchain with G-Cter in SUMO2) linkage. The tract at residues 59 to 79 (GDGGAFPEIHVAQYPLDMGRK) is interaction with PPIL1. Residues K81, K97, K115, K122, K141, K158, and K170 each participate in a glycyl lysine isopeptide (Lys-Gly) (interchain with G-Cter in SUMO2) cross-link. Residues 174–339 (AQYIRYTPSQ…KARERRAGIK (166 aa)) are SNW. S182 and S190 each carry phosphoserine. A Glycyl lysine isopeptide (Lys-Gly) (interchain with G-Cter in SUMO2) cross-link involves residue K193. The interval 209 to 233 (PPRFKINKKIPRGPPSPPAPVMHSP) is disordered. A phosphoserine mark is found at S224, S232, and S234. Glycyl lysine isopeptide (Lys-Gly) (interchain with G-Cter in SUMO2) cross-links involve residues K240, K258, K286, K339, K344, K416, and K441. The tract at residues 311-386 (KMAQKEKEKH…RSKLQRNENR (76 aa)) is disordered. S446 carries the phosphoserine modification. K452 participates in a covalent cross-link: Glycyl lysine isopeptide (Lys-Gly) (interchain with G-Cter in SUMO2). Basic and acidic residues-rich tracts occupy residues 470 to 489 (NRFV…RGRE) and 503 to 530 (KFLE…EHEG). The interval 470–536 (NRFVPDKEFS…EHEGKKRRKE (67 aa)) is disordered. S479 and S481 each carry phosphoserine. Residue K509 forms a Glycyl lysine isopeptide (Lys-Gly) (interchain with G-Cter in SUMO2) linkage.

The protein belongs to the SNW family. As to quaternary structure, identified in the spliceosome C complex. Associates with U4/U6-U5 tri-small nuclear ribonucleoproteins (U4/U6-U5 tri-snRNPs). Component of the minor spliceosome, which splices U12-type introns. Interacts with SKI, SMAD2,SMAD3, RBPJ, RB1, PABPN1, MAGEA1, SIRT1, FOXN3, U2AF2, DAXX and ATP1B4. Interacts with PPIL1. Interacts with VDR and RXRA; preferentially associates with VDR:RXRA heterodimers. Interacts with NCOR2. Interacts with MAML1. Interacts with NOTCH1 NICD; the interaction involves multimerized NOTCH1 NICD. Forms a complex with NOTCH1 NICD and MAML1; the association is dissociated by RBPJ. Associates with positive transcription elongation factor b (P-TEFb). Component of the SNARP complex which consists at least of SNIP1, SNW1, THRAP3, BCLAF1 and PNN. (Microbial infection) Interacts with human papillomavirus type-16 (HPV16) E7 protein. In terms of assembly, (Microbial infection) Interacts with EBV EBNA2; EBNA2 competes with NCOR2 for interaction with SNW1.

It localises to the nucleus. Its function is as follows. Involved in pre-mRNA splicing as component of the spliceosome. As a component of the minor spliceosome, involved in the splicing of U12-type introns in pre-mRNAs. Required for the specific splicing of CDKN1A pre-mRNA; the function probably involves the recruitment of U2AF2 to the mRNA. May recruit PPIL1 to the spliceosome. May be involved in cyclin-D1/CCND1 mRNA stability through the SNARP complex which associates with both the 3'end of the CCND1 gene and its mRNA. Involved in transcriptional regulation. Modulates TGF-beta-mediated transcription via association with SMAD proteins, MYOD1-mediated transcription via association with PABPN1, RB1-mediated transcriptional repression, and retinoid-X receptor (RXR)- and vitamin D receptor (VDR)-dependent gene transcription in a cell line-specific manner probably involving coactivators NCOA1 and GRIP1. Is involved in NOTCH1-mediated transcriptional activation. Binds to multimerized forms of Notch intracellular domain (NICD) and is proposed to recruit transcriptional coactivators such as MAML1 to form an intermediate preactivation complex which associates with DNA-bound CBF-1/RBPJ to form a transcriptional activation complex by releasing SNW1 and redundant NOTCH1 NICD. (Microbial infection) Is recruited by HIV-1 Tat to Tat:P-TEFb:TAR RNA complexes and is involved in Tat transcription by recruitment of MYC, MEN1 and TRRAP to the HIV promoter. Functionally, (Microbial infection) Proposed to be involved in transcriptional activation by EBV EBNA2 of CBF-1/RBPJ-repressed promoters. In Homo sapiens (Human), this protein is SNW domain-containing protein 1 (SNW1).